The chain runs to 506 residues: 2-isopropylmalate synthase (506 aa).

The Pyruvate carboxyltransferase domain occupies 4–266 (ILFMDTTLRD…EPSMTLKEIK (263 aa)). The Mn(2+) site is built by aspartate 13, histidine 201, histidine 203, and asparagine 237. The segment at 390–506 (NITQLQVHFV…KLKSFIQLVK (117 aa)) is regulatory domain.

It belongs to the alpha-IPM synthase/homocitrate synthase family. LeuA type 1 subfamily. In terms of assembly, homodimer. Mn(2+) is required as a cofactor.

The protein resides in the cytoplasm. It catalyses the reaction 3-methyl-2-oxobutanoate + acetyl-CoA + H2O = (2S)-2-isopropylmalate + CoA + H(+). Its pathway is amino-acid biosynthesis; L-leucine biosynthesis; L-leucine from 3-methyl-2-oxobutanoate: step 1/4. Catalyzes the condensation of the acetyl group of acetyl-CoA with 3-methyl-2-oxobutanoate (2-ketoisovalerate) to form 3-carboxy-3-hydroxy-4-methylpentanoate (2-isopropylmalate). This is 2-isopropylmalate synthase from Bacillus cereus (strain ATCC 10987 / NRS 248).